The primary structure comprises 485 residues: Adenosylhomocysteinase (485 aa).

The substrate site is built by Thr64, Asp139, and Glu205. NAD(+) is bound at residue 206–208; sequence TTT. Residues Lys235 and Asp239 each contribute to the substrate site. NAD(+) contacts are provided by residues Asn240, 269–274, Glu292, Asn327, and 348–350; these read GYGDVG and IGH.

It belongs to the adenosylhomocysteinase family. As to quaternary structure, homotetramer. The cofactor is NAD(+).

The catalysed reaction is S-adenosyl-L-homocysteine + H2O = L-homocysteine + adenosine. Its pathway is amino-acid biosynthesis; L-homocysteine biosynthesis; L-homocysteine from S-adenosyl-L-homocysteine: step 1/1. Adenosylhomocysteine is a competitive inhibitor of S-adenosyl-L-methionine-dependent methyl transferase reactions; therefore adenosylhomocysteinase may play a key role in the control of methylations via regulation of the intracellular concentration of adenosylhomocysteine. This Mesembryanthemum crystallinum (Common ice plant) protein is Adenosylhomocysteinase (SAHH).